The sequence spans 561 residues: Probable xyloglucan galactosyltransferase GT20 (561 aa).

Residues 1-31 (MVSKRKSRTSKTIEDSCIHLCSVFFRFLYYT) are Cytoplasmic-facing. A helical; Signal-anchor for type II membrane protein membrane pass occupies residues 32 to 52 (LPALFLFFFLLYLCLSFTTGI). The Lumenal segment spans residues 53 to 561 (SYNNFHMCIF…LLKKINRSVV (509 aa)). Residues Asn87, Asn253, Asn277, Asn418, Asn421, and Asn557 are each glycosylated (N-linked (GlcNAc...) asparagine).

The protein belongs to the glycosyltransferase 47 family. In terms of tissue distribution, expressed in hydathodes.

Its subcellular location is the golgi apparatus membrane. Functionally, functions in xyloglucan synthesis by adding side chains to the xylosylated glucan backbone. Involved in the galactosylation of hemicellulose xyloglucan. In Arabidopsis thaliana (Mouse-ear cress), this protein is Probable xyloglucan galactosyltransferase GT20.